The chain runs to 115 residues: DNA-directed RNA polymerase II subunit RPB11-b1 (115 aa).

Belongs to the archaeal Rpo11/eukaryotic RPB11/RPC19 RNA polymerase subunit family. In terms of assembly, component of the RNA polymerase II (Pol II) complex consisting of 12 subunits. As to expression, ubiquitously expressed.

It is found in the nucleus. Functionally, DNA-dependent RNA polymerase catalyzes the transcription of DNA into RNA using the four ribonucleoside triphosphates as substrates. Component of RNA polymerase II which synthesizes mRNA precursors and many functional non-coding RNAs. Pol II is the central component of the basal RNA polymerase II transcription machinery. It is composed of mobile elements that move relative to each other. RPB11 is part of the core element with the central large cleft. This Homo sapiens (Human) protein is DNA-directed RNA polymerase II subunit RPB11-b1 (POLR2J2).